The primary structure comprises 163 residues: SsrA-binding protein (163 aa).

A compositionally biased stretch (basic and acidic residues) spans 138–157 (EDRRGAIAERESKREMDRAL). Positions 138-163 (EDRRGAIAERESKREMDRALARGRRR) are disordered.

It belongs to the SmpB family.

Its subcellular location is the cytoplasm. Its function is as follows. Required for rescue of stalled ribosomes mediated by trans-translation. Binds to transfer-messenger RNA (tmRNA), required for stable association of tmRNA with ribosomes. tmRNA and SmpB together mimic tRNA shape, replacing the anticodon stem-loop with SmpB. tmRNA is encoded by the ssrA gene; the 2 termini fold to resemble tRNA(Ala) and it encodes a 'tag peptide', a short internal open reading frame. During trans-translation Ala-aminoacylated tmRNA acts like a tRNA, entering the A-site of stalled ribosomes, displacing the stalled mRNA. The ribosome then switches to translate the ORF on the tmRNA; the nascent peptide is terminated with the 'tag peptide' encoded by the tmRNA and targeted for degradation. The ribosome is freed to recommence translation, which seems to be the essential function of trans-translation. This chain is SsrA-binding protein, found in Anaeromyxobacter dehalogenans (strain 2CP-1 / ATCC BAA-258).